Here is a 116-residue protein sequence, read N- to C-terminus: Putative superoxide reductase (116 aa).

Fe cation is bound by residues H20, H46, H52, C101, and H104.

This sequence belongs to the desulfoferrodoxin family. Fe cation serves as cofactor.

The enzyme catalyses reduced [rubredoxin] + superoxide + 2 H(+) = oxidized [rubredoxin] + H2O2. Functionally, uses electrons from reduced NADP, by way of rubredoxin and an oxidoreductase, to catalyze the reduction of superoxide to hydrogen peroxide. In Methanocaldococcus jannaschii (strain ATCC 43067 / DSM 2661 / JAL-1 / JCM 10045 / NBRC 100440) (Methanococcus jannaschii), this protein is Putative superoxide reductase.